The primary structure comprises 296 residues: Diaminopimelate epimerase (296 aa).

Substrate is bound by residues asparagine 17, glutamine 49, and asparagine 69. Catalysis depends on cysteine 78, which acts as the Proton donor. Residues 79 to 80, asparagine 171, asparagine 205, and 223 to 224 contribute to the substrate site; these read GN and ER. Cysteine 232 functions as the Proton acceptor in the catalytic mechanism. Residue 233–234 participates in substrate binding; that stretch reads GT.

Belongs to the diaminopimelate epimerase family. In terms of assembly, homodimer.

It localises to the cytoplasm. It carries out the reaction (2S,6S)-2,6-diaminopimelate = meso-2,6-diaminopimelate. Its pathway is amino-acid biosynthesis; L-lysine biosynthesis via DAP pathway; DL-2,6-diaminopimelate from LL-2,6-diaminopimelate: step 1/1. Functionally, catalyzes the stereoinversion of LL-2,6-diaminopimelate (L,L-DAP) to meso-diaminopimelate (meso-DAP), a precursor of L-lysine and an essential component of the bacterial peptidoglycan. This chain is Diaminopimelate epimerase, found in Methylorubrum extorquens (strain PA1) (Methylobacterium extorquens).